We begin with the raw amino-acid sequence, 919 residues long: Probable glucan 1,3-alpha-glucosidase (919 aa).

Residues 1–28 (MDPPPRPRPHRVAVLLLLLLASSPAARA) form the signal peptide. Catalysis depends on D510, which acts as the Nucleophile. E513 is an active-site residue. The active-site Proton donor is D586. N802 carries an N-linked (GlcNAc...) asparagine glycan.

This sequence belongs to the glycosyl hydrolase 31 family. In terms of assembly, heterodimer of a catalytic alpha subunit and a beta subunit.

The protein localises to the endoplasmic reticulum. It carries out the reaction N(4)-(alpha-D-Glc-(1-&gt;3)-alpha-D-Man-(1-&gt;2)-alpha-D-Man-(1-&gt;2)-alpha-D-Man-(1-&gt;3)-[alpha-D-Man-(1-&gt;2)-alpha-D-Man-(1-&gt;3)-[alpha-D-Man-(1-&gt;2)-alpha-D-Man-(1-&gt;6)]-alpha-D-Man-(1-&gt;6)]-beta-D-Man-(1-&gt;4)-beta-D-GlcNAc-(1-&gt;4)-beta-D-GlcNAc)-L-asparaginyl-[protein] + H2O = N(4)-(alpha-D-Man-(1-&gt;2)-alpha-D-Man-(1-&gt;2)-alpha-D-Man-(1-&gt;3)-[alpha-D-Man-(1-&gt;2)-alpha-D-Man-(1-&gt;3)-[alpha-D-Man-(1-&gt;2)-alpha-D-Man-(1-&gt;6)]-alpha-D-Man-(1-&gt;6)]-beta-D-Man-(1-&gt;4)-beta-D-GlcNAc-(1-&gt;4)-beta-D-GlcNAc)-L-asparaginyl-[protein] (N-glucan mannose isomer 9A1,2,3B1,2,3) + beta-D-glucose. The enzyme catalyses N(4)-(alpha-D-Glc-(1-&gt;3)-alpha-D-Glc-(1-&gt;3)-alpha-D-Man-(1-&gt;2)-alpha-D-Man-(1-&gt;2)-alpha-D-Man-(1-&gt;3)-[alpha-D-Man-(1-&gt;2)-alpha-D-Man-(1-&gt;3)-[alpha-D-Man-(1-&gt;2)-alpha-D-Man-(1-&gt;6)]-alpha-D-Man-(1-&gt;6)]-beta-D-Man-(1-&gt;4)-beta-D-GlcNAc-(1-&gt;4)-beta-D-GlcNAc)-L-asparaginyl-[protein] + H2O = N(4)-(alpha-D-Glc-(1-&gt;3)-alpha-D-Man-(1-&gt;2)-alpha-D-Man-(1-&gt;2)-alpha-D-Man-(1-&gt;3)-[alpha-D-Man-(1-&gt;2)-alpha-D-Man-(1-&gt;3)-[alpha-D-Man-(1-&gt;2)-alpha-D-Man-(1-&gt;6)]-alpha-D-Man-(1-&gt;6)]-beta-D-Man-(1-&gt;4)-beta-D-GlcNAc-(1-&gt;4)-beta-D-GlcNAc)-L-asparaginyl-[protein] + beta-D-glucose. It functions in the pathway glycan metabolism; N-glycan metabolism. Functionally, cleaves sequentially the 2 innermost alpha-1,3-linked glucose residues from the Glc(2)Man(9)GlcNAc(2) oligosaccharide precursor of immature glycoproteins. May be required for defense response elicited by pathogen-associated molecular patterns (PAMPs). This is Probable glucan 1,3-alpha-glucosidase from Oryza sativa subsp. japonica (Rice).